The sequence spans 209 residues: MIGLVGKKVGMTRIFTEDGVSIPVTVIEIEANRVTQVKDLANDGYRAVQVTTGAKKANRVTKPEAGHFAKAGVEAGRTLREFRLSEGEEFTVGQSISVEIFADVKKVDVTGTSKGKGFAGTVKRWNFRTQDATHGNSLSHRVPGSIGQNQTPGKVFKGKKMAGQLGNERVTVQSLDVVRVDAERNLLLVKGAVPGATGSDLIVKPAVKA.

Residues 133–153 form a disordered region; that stretch reads THGNSLSHRVPGSIGQNQTPG. At Q150 the chain carries N5-methylglutamine.

Belongs to the universal ribosomal protein uL3 family. In terms of assembly, part of the 50S ribosomal subunit. Forms a cluster with proteins L14 and L19. Methylated by PrmB.

Functionally, one of the primary rRNA binding proteins, it binds directly near the 3'-end of the 23S rRNA, where it nucleates assembly of the 50S subunit. The polypeptide is Large ribosomal subunit protein uL3 (Pectobacterium carotovorum subsp. carotovorum (strain PC1)).